A 396-amino-acid chain; its full sequence is DNA polymerase interacting tetratricopeptide repeat-containing, protein of 47 kDa (396 aa).

TPR repeat units lie at residues 91–124, 129–162, and 163–196; these read ALNYKEDGNFYMKHKKFRMAIYSFTEGIKTKTDN, AVLYNNRSAAHFFIKNYRSSLSDAQRALFYKPDY, and TKARWRSAQCAYELERFDLCTQMCEELLEVDVDN.

The protein belongs to the TTC4 family. As to quaternary structure, forms a complex with Hsp83 and Hsp70aa. Interacts with DNApol-alpha180; the interaction inhibits the activity of the DNA polymerase and occurs only in proliferating cells but not in quiescent cells. More abundant in young embryos, pupae and females and a lower level expression seen in late embryos, larvae and males.

Its subcellular location is the nucleus. The protein resides in the nucleoplasm. It localises to the cytoplasm. Its function is as follows. May act as a co-chaperone for HSP83. In Drosophila melanogaster (Fruit fly), this protein is DNA polymerase interacting tetratricopeptide repeat-containing, protein of 47 kDa (Dpit47).